A 214-amino-acid chain; its full sequence is Thiamine-phosphate synthase (214 aa).

Residues 39–43 (QYRFK) and N71 contribute to the 4-amino-2-methyl-5-(diphosphooxymethyl)pyrimidine site. Mg(2+) is bound by residues D72 and D91. 4-amino-2-methyl-5-(diphosphooxymethyl)pyrimidine is bound at residue S110. Position 136–138 (136–138 (TKT)) interacts with 2-[(2R,5Z)-2-carboxy-4-methylthiazol-5(2H)-ylidene]ethyl phosphate. A 4-amino-2-methyl-5-(diphosphooxymethyl)pyrimidine-binding site is contributed by K139. Residues G166 and 186–187 (VS) each bind 2-[(2R,5Z)-2-carboxy-4-methylthiazol-5(2H)-ylidene]ethyl phosphate.

It belongs to the thiamine-phosphate synthase family. It depends on Mg(2+) as a cofactor.

The enzyme catalyses 2-[(2R,5Z)-2-carboxy-4-methylthiazol-5(2H)-ylidene]ethyl phosphate + 4-amino-2-methyl-5-(diphosphooxymethyl)pyrimidine + 2 H(+) = thiamine phosphate + CO2 + diphosphate. It catalyses the reaction 2-(2-carboxy-4-methylthiazol-5-yl)ethyl phosphate + 4-amino-2-methyl-5-(diphosphooxymethyl)pyrimidine + 2 H(+) = thiamine phosphate + CO2 + diphosphate. It carries out the reaction 4-methyl-5-(2-phosphooxyethyl)-thiazole + 4-amino-2-methyl-5-(diphosphooxymethyl)pyrimidine + H(+) = thiamine phosphate + diphosphate. The protein operates within cofactor biosynthesis; thiamine diphosphate biosynthesis; thiamine phosphate from 4-amino-2-methyl-5-diphosphomethylpyrimidine and 4-methyl-5-(2-phosphoethyl)-thiazole: step 1/1. Functionally, condenses 4-methyl-5-(beta-hydroxyethyl)thiazole monophosphate (THZ-P) and 2-methyl-4-amino-5-hydroxymethyl pyrimidine pyrophosphate (HMP-PP) to form thiamine monophosphate (TMP). The chain is Thiamine-phosphate synthase from Hydrogenobaculum sp. (strain Y04AAS1).